Here is a 461-residue protein sequence, read N- to C-terminus: Putative aldehyde dehydrogenase FUS7 (461 aa).

An NAD(+)-binding site is contributed by 220–225; the sequence is GSTTTG. Active-site residues include E242 and C276.

The protein belongs to the aldehyde dehydrogenase family.

It carries out the reaction an aldehyde + NAD(+) + H2O = a carboxylate + NADH + 2 H(+). In terms of biological role, putative aldehyde dehydrogenase; part of the gene cluster that mediates the biosynthesis of the mycotoxin fusarin C. Within the cluster, FUS1, FUS2, FUS8 and FUS9 are sufficient for fusarin production. The other FUS cluster members are not essential for fusarin C biosynthesis. The sequence is that of Putative aldehyde dehydrogenase FUS7 from Gibberella fujikuroi (strain CBS 195.34 / IMI 58289 / NRRL A-6831) (Bakanae and foot rot disease fungus).